We begin with the raw amino-acid sequence, 152 residues long: Type-1 angiotensin II receptor-associated protein (152 aa).

At 1–23 the chain is on the extracellular side; it reads MELPAVNLKVILLGHWLLTTWGC. Residues 24–44 traverse the membrane as a helical segment; it reads IVFSGSYAWANFTILALGVWA. At 45-55 the chain is on the cytoplasmic side; that stretch reads VAQRDSIDAIS. Residues 56–76 traverse the membrane as a helical segment; it reads MFLGGLLATIFLDIVHISIFY. Residues 77–86 are Extracellular-facing; the sequence is PRAGLTDTGR. Residues 87–107 traverse the membrane as a helical segment; sequence FGAGMAILSLLLKPLSCCFVY. Over 108–152 the chain is Cytoplasmic; the sequence is HMYRQRGGFLGSSQDRSAYQTIDSAEAPANAFAVPEGRGQDARGY. Phosphoserine is present on residues Ser119 and Ser120. Phosphothreonine is present on Thr128. Ser131 bears the Phosphoserine mark.

Interacts with RACK1, and with the carboxy-terminal region of AGTR1.

It localises to the endoplasmic reticulum membrane. The protein localises to the golgi apparatus membrane. Its subcellular location is the cytoplasmic vesicle membrane. Functionally, appears to be a negative regulator of type-1 angiotensin II receptor-mediated signaling by regulating receptor internalization as well as mechanism of receptor desensitization such as phosphorylation. Also induces a decrease in cell proliferation and angiotensin II-stimulated transcriptional activity. In Pongo abelii (Sumatran orangutan), this protein is Type-1 angiotensin II receptor-associated protein (AGTRAP).